The chain runs to 184 residues: Probable RNA 2'-phosphotransferase (184 aa).

This sequence belongs to the KptA/TPT1 family.

Its function is as follows. Removes the 2'-phosphate from RNA via an intermediate in which the phosphate is ADP-ribosylated by NAD followed by a presumed transesterification to release the RNA and generate ADP-ribose 1''-2''-cyclic phosphate (APPR&gt;P). May function as an ADP-ribosylase. The sequence is that of Probable RNA 2'-phosphotransferase from Shigella boydii serotype 18 (strain CDC 3083-94 / BS512).